The primary structure comprises 449 residues: Na(+)-translocating NADH-quinone reductase subunit A (449 aa).

This sequence belongs to the NqrA family. As to quaternary structure, composed of six subunits; NqrA, NqrB, NqrC, NqrD, NqrE and NqrF.

It catalyses the reaction a ubiquinone + n Na(+)(in) + NADH + H(+) = a ubiquinol + n Na(+)(out) + NAD(+). Its function is as follows. NQR complex catalyzes the reduction of ubiquinone-1 to ubiquinol by two successive reactions, coupled with the transport of Na(+) ions from the cytoplasm to the periplasm. NqrA to NqrE are probably involved in the second step, the conversion of ubisemiquinone to ubiquinol. The protein is Na(+)-translocating NADH-quinone reductase subunit A of Actinobacillus pleuropneumoniae serotype 3 (strain JL03).